The primary structure comprises 403 residues: Stearoyl-[acyl-carrier-protein] 9-desaturase 4, chloroplastic (403 aa).

Residues 1–44 (MALLLNSTMTVAMKQNPATAVSFMQTTCLGSSFSPPRHLQVSCV) constitute a chloroplast transit peptide. Positions 140, 178, 181, 231, 264, and 267 each coordinate Fe cation.

This sequence belongs to the fatty acid desaturase type 2 family. In terms of assembly, homodimer. Requires Fe(2+) as cofactor. In terms of tissue distribution, preferentially expressed in roots.

The protein resides in the plastid. It is found in the chloroplast. The catalysed reaction is octadecanoyl-[ACP] + 2 reduced [2Fe-2S]-[ferredoxin] + O2 + 2 H(+) = (9Z)-octadecenoyl-[ACP] + 2 oxidized [2Fe-2S]-[ferredoxin] + 2 H2O. Its pathway is lipid metabolism; fatty acid metabolism. Functionally, converts stearoyl-ACP to oleoyl-ACP by introduction of a cis double bond between carbons 9 and 10 of the acyl chain. This is Stearoyl-[acyl-carrier-protein] 9-desaturase 4, chloroplastic (S-ACP-DES4) from Arabidopsis thaliana (Mouse-ear cress).